The primary structure comprises 363 residues: Anthranilate phosphoribosyltransferase (363 aa).

Residues glycine 85, 88–89 (GD), threonine 93, 95–98 (NVST), 113–121 (KHGNRALSS), and alanine 125 each bind 5-phospho-alpha-D-ribose 1-diphosphate. Glycine 85 serves as a coordination point for anthranilate. Residue serine 97 participates in Mg(2+) binding. Anthranilate is bound at residue asparagine 116. An anthranilate-binding site is contributed by arginine 171. 2 residues coordinate Mg(2+): aspartate 233 and glutamate 234.

The protein belongs to the anthranilate phosphoribosyltransferase family. In terms of assembly, homodimer. It depends on Mg(2+) as a cofactor.

The enzyme catalyses N-(5-phospho-beta-D-ribosyl)anthranilate + diphosphate = 5-phospho-alpha-D-ribose 1-diphosphate + anthranilate. It functions in the pathway amino-acid biosynthesis; L-tryptophan biosynthesis; L-tryptophan from chorismate: step 2/5. In terms of biological role, catalyzes the transfer of the phosphoribosyl group of 5-phosphorylribose-1-pyrophosphate (PRPP) to anthranilate to yield N-(5'-phosphoribosyl)-anthranilate (PRA). In Gluconobacter oxydans (strain 621H) (Gluconobacter suboxydans), this protein is Anthranilate phosphoribosyltransferase.